The sequence spans 72 residues: Sperm protein associated with the nucleus on the X chromosome N1 (72 aa).

A disordered region spans residues Met1–Leu40. The span at Gly10–Val35 shows a compositional bias: basic and acidic residues.

The protein belongs to the SPAN-X family.

The protein is Sperm protein associated with the nucleus on the X chromosome N1 (SPANXN1) of Gorilla gorilla gorilla (Western lowland gorilla).